The primary structure comprises 176 residues: Large ribosomal subunit protein bL17m (176 aa).

The transit peptide at 1 to 8 directs the protein to the mitochondrion; that stretch reads MRLSLAAA.

The protein belongs to the bacterial ribosomal protein bL17 family. In terms of assembly, component of the mitochondrial ribosome large subunit (39S) which comprises a 16S rRNA and about 50 distinct proteins.

Its subcellular location is the mitochondrion. This chain is Large ribosomal subunit protein bL17m (Mrpl17), found in Mus musculus (Mouse).